Reading from the N-terminus, the 305-residue chain is tRNA dimethylallyltransferase (305 aa).

11 to 18 (GPTAVGKT) serves as a coordination point for ATP. 13–18 (TAVGKT) contacts substrate. The interval 36-39 (DSMQ) is interaction with substrate tRNA.

It belongs to the IPP transferase family. In terms of assembly, monomer. Requires Mg(2+) as cofactor.

It carries out the reaction adenosine(37) in tRNA + dimethylallyl diphosphate = N(6)-dimethylallyladenosine(37) in tRNA + diphosphate. Catalyzes the transfer of a dimethylallyl group onto the adenine at position 37 in tRNAs that read codons beginning with uridine, leading to the formation of N6-(dimethylallyl)adenosine (i(6)A). This is tRNA dimethylallyltransferase from Listeria monocytogenes serotype 4b (strain CLIP80459).